Here is a 426-residue protein sequence, read N- to C-terminus: Mothers against decapentaplegic homolog 7 (426 aa).

A disordered region spans residues 14-40 (WRSRAPGGEDEEEGVGGGGGGGGLRGE). A compositionally biased stretch (gly residues) spans 28-39 (VGGGGGGGGLRG). Residues Lys64 and Lys70 each carry the N6-acetyllysine; alternate modification. Residues Lys64 and Lys70 each participate in a glycyl lysine isopeptide (Lys-Gly) (interchain with G-Cter in ubiquitin); alternate cross-link. The 144-residue stretch at 64 to 207 (KAVRGAKGHH…LSRLCELESP (144 aa)) folds into the MH1 domain. The span at 67–76 (RGAKGHHHPH) shows a compositional bias: basic residues. The interval 67–88 (RGAKGHHHPHPPSSGAGAAGGA) is disordered. 4 residues coordinate Zn(2+): Cys125, Cys180, Cys192, and His197. The short motif at 208-211 (PPPY) is the PY-motif element. Positions 208–217 (PPPYSRYPMD) are important for interaction with SMURF2. The residue at position 249 (Ser249) is a Phosphoserine. An MH2 domain is found at 261–426 (WCVVAYWEEK…CWLEVIFNSR (166 aa)).

The protein belongs to the dwarfin/SMAD family. In terms of assembly, interacts with COPS5. Interacts with STAMBP. Interacts with NEDD4L. Interacts with RNF111, AXIN1 and AXIN2. Interacts with PPP1R15A. Interacts with ACVR1B, SMURF1, SMURF2 and TGFBR1; SMAD7 recruits SMURF1 and SMURF2 to the TGF-beta receptor and regulates its degradation. Interacts with WWP1. Interacts with PDPK1 (via PH domain). Interacts with TSC22D1/TSC-22; the interaction requires TGF-beta and the interaction is inhibited by TGFBR1. In terms of processing, phosphorylation on Ser-249 does not affect its stability, nuclear localization or inhibitory function in TGFB signaling; however it affects its ability to regulate transcription. Phosphorylated by PDPK1. Post-translationally, ubiquitinated by WWP1. Polyubiquitinated by RNF111, which is enhanced by AXIN1 and promotes proteasomal degradation. In response to TGF-beta, ubiquitinated by SMURF1; which promotes its degradation. Acetylation prevents ubiquitination and degradation mediated by SMURF1. As to expression, ubiquitous.

It localises to the nucleus. Its subcellular location is the cytoplasm. Functionally, antagonist of signaling by TGF-beta (transforming growth factor) type 1 receptor superfamily members; has been shown to inhibit TGF-beta (Transforming growth factor) and activin signaling by associating with their receptors thus preventing SMAD2 access. Functions as an adapter to recruit SMURF2 to the TGF-beta receptor complex. Also acts by recruiting the PPP1R15A-PP1 complex to TGFBR1, which promotes its dephosphorylation. Positively regulates PDPK1 kinase activity by stimulating its dissociation from the 14-3-3 protein YWHAQ which acts as a negative regulator. This chain is Mothers against decapentaplegic homolog 7 (Smad7), found in Rattus norvegicus (Rat).